Reading from the N-terminus, the 321-residue chain is N-acetyl-gamma-glutamyl-phosphate reductase (321 aa).

Cysteine 131 is an active-site residue.

Belongs to the NAGSA dehydrogenase family. Type 1 subfamily.

It localises to the cytoplasm. The enzyme catalyses N-acetyl-L-glutamate 5-semialdehyde + phosphate + NADP(+) = N-acetyl-L-glutamyl 5-phosphate + NADPH + H(+). It functions in the pathway amino-acid biosynthesis; L-arginine biosynthesis; N(2)-acetyl-L-ornithine from L-glutamate: step 3/4. Functionally, catalyzes the NADPH-dependent reduction of N-acetyl-5-glutamyl phosphate to yield N-acetyl-L-glutamate 5-semialdehyde. The sequence is that of N-acetyl-gamma-glutamyl-phosphate reductase from Christiangramia forsetii (strain DSM 17595 / CGMCC 1.15422 / KT0803) (Gramella forsetii).